Consider the following 353-residue polypeptide: Photosystem II protein D1 (353 aa).

Threonine 2 carries the post-translational modification N-acetylthreonine. Threonine 2 is subject to Phosphothreonine. A run of 3 helical transmembrane segments spans residues 29–46, 118–133, and 142–156; these read YIGWFGVLMIPTLLTATS, HFLLGVACYMGREWEL, and WIAVAYSAPVAAATA. A chlorophyll a-binding site is contributed by histidine 118. Tyrosine 126 contributes to the pheophytin a binding site. Aspartate 170 and glutamate 189 together coordinate [CaMn4O5] cluster. The helical transmembrane segment at 197-218 threads the bilayer; sequence FHMLGVAGVFGGSLFSAMHGSL. Histidine 198 contributes to the chlorophyll a binding site. Residues histidine 215 and 264-265 contribute to the a quinone site; that span reads SF. Residue histidine 215 coordinates Fe cation. Histidine 272 contributes to the Fe cation binding site. A helical membrane pass occupies residues 274-288; that stretch reads FLAAWPVVGIWFTAL. [CaMn4O5] cluster contacts are provided by histidine 332, glutamate 333, aspartate 342, and alanine 344. Positions 345 to 353 are excised as a propeptide; the sequence is ALEVPSLNG.

It belongs to the reaction center PufL/M/PsbA/D family. In terms of assembly, PSII is composed of 1 copy each of membrane proteins PsbA, PsbB, PsbC, PsbD, PsbE, PsbF, PsbH, PsbI, PsbJ, PsbK, PsbL, PsbM, PsbT, PsbX, PsbY, PsbZ, Psb30/Ycf12, at least 3 peripheral proteins of the oxygen-evolving complex and a large number of cofactors. It forms dimeric complexes. The D1/D2 heterodimer binds P680, chlorophylls that are the primary electron donor of PSII, and subsequent electron acceptors. It shares a non-heme iron and each subunit binds pheophytin, quinone, additional chlorophylls, carotenoids and lipids. D1 provides most of the ligands for the Mn4-Ca-O5 cluster of the oxygen-evolving complex (OEC). There is also a Cl(-1) ion associated with D1 and D2, which is required for oxygen evolution. The PSII complex binds additional chlorophylls, carotenoids and specific lipids. serves as cofactor. In terms of processing, tyr-161 forms a radical intermediate that is referred to as redox-active TyrZ, YZ or Y-Z. Post-translationally, C-terminally processed by CTPA; processing is essential to allow assembly of the oxygen-evolving complex and thus photosynthetic growth.

The protein resides in the plastid. It localises to the chloroplast thylakoid membrane. The catalysed reaction is 2 a plastoquinone + 4 hnu + 2 H2O = 2 a plastoquinol + O2. Photosystem II (PSII) is a light-driven water:plastoquinone oxidoreductase that uses light energy to abstract electrons from H(2)O, generating O(2) and a proton gradient subsequently used for ATP formation. It consists of a core antenna complex that captures photons, and an electron transfer chain that converts photonic excitation into a charge separation. The D1/D2 (PsbA/PsbD) reaction center heterodimer binds P680, the primary electron donor of PSII as well as several subsequent electron acceptors. In Lolium perenne (Perennial ryegrass), this protein is Photosystem II protein D1.